We begin with the raw amino-acid sequence, 202 residues long: Large ribosomal subunit protein bL17 (202 aa).

Residues Asp-148–Ala-202 are disordered. Positions Pro-169–Asp-182 are enriched in low complexity. The segment covering Glu-183–Pro-194 has biased composition (acidic residues).

This sequence belongs to the bacterial ribosomal protein bL17 family. As to quaternary structure, part of the 50S ribosomal subunit. Contacts protein L32.

The protein is Large ribosomal subunit protein bL17 of Kineococcus radiotolerans (strain ATCC BAA-149 / DSM 14245 / SRS30216).